The following is a 540-amino-acid chain: Raucaffricine-O-beta-D-glucosidase (540 aa).

Residues Gln36, His140, and 185–186 (NE) each bind a beta-D-glucoside. The active-site Proton donor is Glu186. Cys221 and Cys230 form a disulfide bridge. A beta-D-glucoside is bound by residues Tyr347, Glu420, Trp469, 476-477 (EW), and Phe485. The active-site Nucleophile is the Glu420.

It belongs to the glycosyl hydrolase 1 family.

The catalysed reaction is raucaffricine + H2O = vomilenine + D-glucose. The enzyme catalyses vomilenine + UDP-alpha-D-glucose = raucaffricine + UDP + H(+). In terms of biological role, glucosidase specifically involved in alkaloid biosynthesis leading to the accumulation of several alkaloids, including ajmaline, an important plant-derived pharmaceutical used in the treatment of heart disorders. The chain is Raucaffricine-O-beta-D-glucosidase from Rauvolfia serpentina (Serpentine wood).